The sequence spans 209 residues: Kynurenine formamidase (209 aa).

Residue Trp-20 participates in substrate binding. Positions 50, 54, and 56 each coordinate Zn(2+). The Proton donor/acceptor role is filled by His-60. Residues His-161 and Glu-173 each coordinate Zn(2+).

It belongs to the Cyclase 1 superfamily. KynB family. As to quaternary structure, homodimer. Zn(2+) is required as a cofactor.

The enzyme catalyses N-formyl-L-kynurenine + H2O = L-kynurenine + formate + H(+). The protein operates within amino-acid degradation; L-tryptophan degradation via kynurenine pathway; L-kynurenine from L-tryptophan: step 2/2. Its function is as follows. Catalyzes the hydrolysis of N-formyl-L-kynurenine to L-kynurenine, the second step in the kynurenine pathway of tryptophan degradation. The protein is Kynurenine formamidase of Bacillus cytotoxicus (strain DSM 22905 / CIP 110041 / 391-98 / NVH 391-98).